The following is a 114-amino-acid chain: Iron-sulfur cluster insertion protein ErpA (114 aa).

Positions 42, 106, and 108 each coordinate iron-sulfur cluster.

It belongs to the HesB/IscA family. In terms of assembly, homodimer. The cofactor is iron-sulfur cluster.

Functionally, required for insertion of 4Fe-4S clusters for at least IspG. This is Iron-sulfur cluster insertion protein ErpA from Pseudoalteromonas atlantica (strain T6c / ATCC BAA-1087).